The following is a 319-amino-acid chain: MAATVAFSGVLRRAGWRLLQLRCLPVPRCRPALAPRAFRASAMQLRSLDQQKDQPPPSSSQQQSEAQGAEEPNPEALRSPPRYTDQGGEEEEDYESEEQLQHRILTAALEFVPTHGWTAEAIAEGAQSLGLSSAAASMFGDDGSELILHFVTQCNARLTHVLEEEQKLVQLGQAEKKKTDKFLRDAVETRLRMLIPYIQHWPRAFSILMLPHNIPPSLNLLTSMVDDMWHYAGDQSTDFNWYTRRAVLAGIYNTTELVMMQDSSPDFEDTWRFLENRISDAMNMGHTAKQVKSTGEALVQGLMGAAVTLKNLTGLNQRR.

The N-terminal 45 residues, 1–45 (MAATVAFSGVLRRAGWRLLQLRCLPVPRCRPALAPRAFRASAMQL), are a transit peptide targeting the mitochondrion. Positions 17–32 (RLLQLRCLPVPRCRPA) match the SIFI-degron motif. The segment at 46–99 (RSLDQQKDQPPPSSSQQQSEAQGAEEPNPEALRSPPRYTDQGGEEEEDYESEEQ) is disordered. Positions 87 to 98 (GGEEEEDYESEE) are enriched in acidic residues. Lysine 176 is modified (N6-acetyllysine). Residue arginine 245 participates in a 1,2-diacylglycero-3-phosphoethanolamine binding.

It belongs to the COQ9 family. In terms of assembly, homodimer. Heterodimer; two heterodimers of COQ7:COQ9 come together on the same side of the lipid pseudo-bilayer and form a curved tetramer with a hydrophobic surface suitable for membrane interaction. These two tetramers assemble into a soluble octamer with a pseudo-bilayer of lipids captured within. Interacts with COQ7; this interaction allows ubiquinone (CoQ) isoprene intermediates presentation to COQ7 and facilitates the COQ7-mediated hydroxylase step. Post-translationally, in response to mitochondrial stress, the precursor protein is ubiquitinated by the SIFI complex in the cytoplasm before mitochondrial import, leading to its degradation. Within the SIFI complex, UBR4 initiates ubiquitin chain that are further elongated or branched by KCMF1.

Its subcellular location is the mitochondrion. It participates in cofactor biosynthesis; ubiquinone biosynthesis. Functionally, membrane-associated protein that warps the membrane surface to access and bind aromatic isoprenes with high specificity, including ubiquinone (CoQ) isoprene intermediates and presents them directly to COQ7, therefore facilitating the COQ7-mediated hydroxylase step. Participates in the biosynthesis of coenzyme Q, also named ubiquinone, an essential lipid-soluble electron transporter for aerobic cellular respiration. The polypeptide is Ubiquinone biosynthesis protein COQ9, mitochondrial (Bos taurus (Bovine)).